We begin with the raw amino-acid sequence, 475 residues long: Ribulose bisphosphate carboxylase large chain (475 aa).

Residues 1-2 constitute a propeptide that is removed on maturation; that stretch reads MS. Position 3 is an N-acetylproline (Pro3). N6,N6,N6-trimethyllysine is present on Lys14. 2 residues coordinate substrate: Asn123 and Thr173. The active-site Proton acceptor is Lys175. Residue Lys177 coordinates substrate. Mg(2+) contacts are provided by Lys201, Asp203, and Glu204. Lys201 is modified (N6-carboxylysine). The active-site Proton acceptor is the His294. Arg295, His327, and Ser379 together coordinate substrate.

Belongs to the RuBisCO large chain family. Type I subfamily. Heterohexadecamer of 8 large chains and 8 small chains; disulfide-linked. The disulfide link is formed within the large subunit homodimers. It depends on Mg(2+) as a cofactor. The disulfide bond which can form in the large chain dimeric partners within the hexadecamer appears to be associated with oxidative stress and protein turnover.

The protein localises to the plastid. The protein resides in the chloroplast. The enzyme catalyses 2 (2R)-3-phosphoglycerate + 2 H(+) = D-ribulose 1,5-bisphosphate + CO2 + H2O. It carries out the reaction D-ribulose 1,5-bisphosphate + O2 = 2-phosphoglycolate + (2R)-3-phosphoglycerate + 2 H(+). Functionally, ruBisCO catalyzes two reactions: the carboxylation of D-ribulose 1,5-bisphosphate, the primary event in carbon dioxide fixation, as well as the oxidative fragmentation of the pentose substrate in the photorespiration process. Both reactions occur simultaneously and in competition at the same active site. The sequence is that of Ribulose bisphosphate carboxylase large chain from Pinus pinea (Italian stone pine).